A 107-amino-acid chain; its full sequence is Alpha-elapitoxin-Al2a (107 aa).

Positions 1-21 (MKTLLLTLVVVTIVCLDLGDS) are cleaved as a signal peptide. 5 disulfide bridges follow: C24–C41, C34–C62, C47–C51, C66–C77, and C78–C83.

It belongs to the three-finger toxin family. Long-chain subfamily. Type II alpha-neurotoxin sub-subfamily. Expressed by the venom gland.

The protein resides in the secreted. Functionally, binds with high affinity to muscular (alpha-1/CHRNA1) and neuronal (alpha-7/CHRNA7) nicotinic acetylcholine receptor (nAChR) and inhibits acetylcholine from binding to the receptor, thereby impairing neuromuscular and neuronal transmission. This is Alpha-elapitoxin-Al2a from Austrelaps labialis (Pygmy copperhead).